A 1190-amino-acid polypeptide reads, in one-letter code: Pyruvate-flavodoxin oxidoreductase (1190 aa).

4Fe-4S ferredoxin-type domains lie at 687-716 and 743-773; these read EIPV…SKVY and FTIQ…PRKK. Positions 696, 699, 702, 706, 752, 755, 758, 762, 826, 829, 854, and 1089 each coordinate [4Fe-4S] cluster.

This sequence belongs to the pyruvate:ferredoxin/flavodoxin oxidoreductase family. Requires [4Fe-4S] cluster as cofactor.

It catalyses the reaction oxidized [flavodoxin] + pyruvate + CoA + 2 H(+) = reduced [flavodoxin] + acetyl-CoA + CO2. Its function is as follows. Oxidoreductase required for the transfer of electrons from pyruvate to flavodoxin, which reduces nitrogenase. The chain is Pyruvate-flavodoxin oxidoreductase (nifJ) from Trichormus variabilis (strain ATCC 29413 / PCC 7937) (Anabaena variabilis).